The primary structure comprises 34 residues: Surfactant protein C (34 aa).

C4 is lipidated: S-palmitoyl cysteine.

The protein resides in the secreted. Its subcellular location is the extracellular space. It is found in the surface film. Functionally, pulmonary surfactant associated proteins promote alveolar stability by lowering the surface tension at the air-liquid interface in the peripheral air spaces. The sequence is that of Surfactant protein C (SFTPC) from Canis lupus familiaris (Dog).